A 305-amino-acid chain; its full sequence is Sulfate adenylyltransferase subunit 2 (305 aa).

It belongs to the PAPS reductase family. CysD subfamily. Heterodimer composed of CysD, the smaller subunit, and CysN.

The catalysed reaction is sulfate + ATP + H(+) = adenosine 5'-phosphosulfate + diphosphate. It functions in the pathway sulfur metabolism; hydrogen sulfide biosynthesis; sulfite from sulfate: step 1/3. In terms of biological role, with CysN forms the ATP sulfurylase (ATPS) that catalyzes the adenylation of sulfate producing adenosine 5'-phosphosulfate (APS) and diphosphate, the first enzymatic step in sulfur assimilation pathway. APS synthesis involves the formation of a high-energy phosphoric-sulfuric acid anhydride bond driven by GTP hydrolysis by CysN coupled to ATP hydrolysis by CysD. The chain is Sulfate adenylyltransferase subunit 2 from Myxococcus xanthus (strain DK1622).